A 102-amino-acid chain; its full sequence is Small ribosomal subunit protein uS10 (102 aa).

The protein belongs to the universal ribosomal protein uS10 family. In terms of assembly, part of the 30S ribosomal subunit.

Its function is as follows. Involved in the binding of tRNA to the ribosomes. This chain is Small ribosomal subunit protein uS10, found in Bifidobacterium longum subsp. infantis (strain ATCC 15697 / DSM 20088 / JCM 1222 / NCTC 11817 / S12).